Reading from the N-terminus, the 334-residue chain is NAD-dependent protein deacylase sirtuin-6 (334 aa).

An N-acetylserine modification is found at S2. At S10 the chain carries Phosphoserine. Residues 27 to 272 (PEELERKVWE…CRLMKHLGLE (246 aa)) enclose the Deacetylase sirtuin-type domain. The residue at position 33 (K33) is an N6-acetyllysine. Positions 53, 57, 64, 65, 71, 113, and 133 each coordinate NAD(+). The Proton acceptor role is filled by H133. Residues C141, C144, and C166 each contribute to the Zn(2+) site. K170 is covalently cross-linked (Glycyl lysine isopeptide (Lys-Gly) (interchain with G-Cter in ubiquitin)). C177 is a Zn(2+) binding site. The NAD(+) site is built by G214, S216, N240, Q242, and V258. The segment at 312-334 (KSKPNSPILHRPPKRVKTEAAPS) is disordered.

It belongs to the sirtuin family. Class IV subfamily. In terms of assembly, homodimer; binds to nucleosomes and DNA ends as a homodimer. Interacts with RELA; interferes with RELA binding to target DNA. Interacts with SMARCA5; promoting recruitment of SMARCA5/SNF2H to double-strand breaks (DSBs) sites. Interacts with the mTORC2 complex; preventing the ability of SIRT6 to deacetylate FOXO1. Interacts with the CLOCK-BMAL1 complex; recruited by the CLOCK-BMAL1 complex to regulate expression of clock-controlled genes. Interacts with CSNK2A2; preventing CSNK2A2 localization to the nucleus. Zn(2+) serves as cofactor. Post-translationally, acetylated at Lys-33. Deacetylation at Lys-33 by SIRT1 promotes homomultimerization and binding to double-strand breaks (DSBs) sites. In terms of processing, phosphorylation at Ser-10 by MAPK8/JNK1 in response to oxidative stress stimulates the mono-ADP-ribosyltransferase activity on PARP1, leading to PARP1 recruitment to double-strand breaks (DSBs). Monoubiquitinated at Lys-170 by STUB1/CHIP, preventing its degradation by the proteasome. Post-translationally, sumoylated, leading to specifically decrease ability to deacetylate histone H3 at 'Lys-56' (H3K56ac). In terms of tissue distribution, highest levels are found in muscle, thymus, spleen, brain and heart (at protein level).

Its subcellular location is the nucleus. The protein localises to the chromosome. The protein resides in the telomere. It is found in the endoplasmic reticulum. It carries out the reaction N(6)-acetyl-L-lysyl-[protein] + NAD(+) + H2O = 2''-O-acetyl-ADP-D-ribose + nicotinamide + L-lysyl-[protein]. It catalyses the reaction N(6)-tetradecanoyl-L-lysyl-[protein] + NAD(+) + H2O = 2''-O-tetradecanoyl-ADP-D-ribose + nicotinamide + L-lysyl-[protein]. The enzyme catalyses N(6)-hexadecanoyl-L-lysyl-[protein] + NAD(+) + H2O = 2''-O-hexadecanoyl-ADP-D-ribose + nicotinamide + L-lysyl-[protein]. The catalysed reaction is L-lysyl-[protein] + NAD(+) = N(6)-(ADP-D-ribosyl)-L-lysyl-[protein] + nicotinamide + H(+). It carries out the reaction L-arginyl-[protein] + NAD(+) = N(omega)-(ADP-D-ribosyl)-L-arginyl-[protein] + nicotinamide + H(+). With respect to regulation, compared to the defatty-acylase activity, the protein deacetylase activity is weak in vitro, and requires activation. The histone deacetylase activity is strongly activated upon binding to nucleosomes and chromatin in vivo. Two molecules of SIRT6 associate with the acidic patch of one nucleosome, while the C-terminal disordered region of SIRT6 associates with nucleosomal DNA, leading to efficient histone deacetylation. The protein-lysine deacetylase activity is also activated by long-chain free fatty-acids. In terms of biological role, NAD-dependent protein deacetylase, deacylase and mono-ADP-ribosyltransferase that plays an essential role in DNA damage repair, telomere maintenance, metabolic homeostasis, inflammation, tumorigenesis and aging. Displays protein-lysine deacetylase or defatty-acylase (demyristoylase and depalmitoylase) activity, depending on the context. Acts as a key histone deacetylase by catalyzing deacetylation of histone H3 at 'Lys-9', 'Lys-18' and 'Lys-56' (H3K9ac, H3K18ac and H3K56ac, respectively), suppressing target gene expression of several transcription factors, including NF-kappa-B. Acts as an inhibitor of transcription elongation by mediating deacetylation of H3K9ac and H3K56ac, preventing release of NELFE from chromatin and causing transcriptional pausing. Involved in DNA repair by promoting double-strand break (DSB) repair: acts as a DSB sensor by recognizing and binding DSB sites, leading to (1) recruitment of DNA repair proteins, such as SMARCA5/SNF2H, and (2) deacetylation of histone H3K9ac and H3K56ac. SIRT6 participation to DSB repair is probably involved in extension of life span. Also promotes DNA repair by deacetylating non-histone proteins, such as DDB2 and p53/TP53. Specifically deacetylates H3K18ac at pericentric heterochromatin, thereby maintaining pericentric heterochromatin silencing at centromeres and protecting against genomic instability and cellular senescence. Involved in telomere maintenance by catalyzing deacetylation of histone H3 in telomeric chromatin, regulating telomere position effect and telomere movement in response to DNA damage. Required for embryonic stem cell differentiation by mediating histone deacetylation of H3K9ac. Plays a major role in metabolism by regulating processes such as glycolysis, gluconeogenesis, insulin secretion and lipid metabolism. Inhibits glycolysis via histone deacetylase activity and by acting as a corepressor of the transcription factor HIF1A, thereby controlling the expression of multiple glycolytic genes. Has tumor suppressor activity by repressing glycolysis, thereby inhibiting the Warburg effect. Also regulates glycolysis and tumorigenesis by mediating deacetylation and nuclear export of non-histone proteins, such as isoform M2 of PKM (PKM2). Acts as a negative regulator of gluconeogenesis by mediating deacetylation of non-histone proteins, such as FOXO1 and KAT2A/GCN5. Promotes beta-oxidation of fatty acids during fasting by catalyzing deacetylation of NCOA2, inducing coactivation of PPARA. Acts as a regulator of lipid catabolism in brown adipocytes, both by catalyzing deacetylation of histones and non-histone proteins, such as FOXO1. Also acts as a regulator of circadian rhythms, both by regulating expression of clock-controlled genes involved in lipid and carbohydrate metabolism, and by catalyzing deacetylation of PER2. The defatty-acylase activity is specifically involved in regulation of protein secretion. Has high activity toward long-chain fatty acyl groups and mediates protein-lysine demyristoylation and depalmitoylation of target proteins, such as RRAS2 and TNF, thereby regulating their secretion. Also acts as a mono-ADP-ribosyltransferase by mediating mono-ADP-ribosylation of PARP1, TRIM28/KAP1 or SMARCC2/BAF170. Mono-ADP-ribosyltransferase activity is involved in DNA repair, cellular senescence, repression of LINE-1 retrotransposon elements and regulation of transcription. The chain is NAD-dependent protein deacylase sirtuin-6 from Mus musculus (Mouse).